The sequence spans 552 residues: Rqc2 homolog RqcH (552 aa).

Coiled-coil stretches lie at residues 271–317 (RDRV…QKGE) and 357–398 (NAQR…MLGQ).

The protein belongs to the NEMF family. Associates with stalled 50S ribosomal subunits, binds to RqcH. Recombinant protein interacts with the N-terminal 30 kDa of human fibronectin (FN1).

Key component of the ribosome quality control system (RQC), a ribosome-associated complex that mediates the extraction of incompletely synthesized nascent chains from stalled ribosomes and their subsequent degradation. RqcH recruits Ala-charged tRNA, and with RqcP directs the elongation of stalled nascent chains on 50S ribosomal subunits, leading to non-templated C-terminal alanine extensions (Ala tail). The Ala tail promotes nascent chain degradation. May add between 1 and at least 8 Ala residues. Binds to stalled 50S ribosomal subunits. This Streptococcus suis (strain 05ZYH33) protein is Rqc2 homolog RqcH.